The sequence spans 606 residues: Probable potassium transport system protein Kup (606 aa).

A run of 12 helical transmembrane segments spans residues 18–38 (GLVFGDIGTSPIYTLTVVFAL), 46–66 (VFGILSLVFWTMTILVTAEYA), 97–117 (LTFVVFLTYLGVSLLMGDGVI), 138–158 (GLHQSWLILIAAIIAVGLFVF), 166–186 (VAGAFGPIMVVWFASLALSGA), 212–232 (GLAGFIVLSEVILCATGGEAL), 247–267 (AWYIVFWALYLNYLGQGAFII), 287–307 (LYIPFLILTILATIIASQAMI), 339–359 (IYIGSVNWMLMIAVVVIMLVF), 368–388 (AYGLAVTGSMSITGIMMILIL), 395–415 (WKAVFAALITVVDLVFFTACL), and 418–438 (LPHGGYWSIILASVPFITILV).

This sequence belongs to the HAK/KUP transporter (TC 2.A.72) family.

Its subcellular location is the cell inner membrane. The catalysed reaction is K(+)(in) + H(+)(in) = K(+)(out) + H(+)(out). Functionally, transport of potassium into the cell. Likely operates as a K(+):H(+) symporter. The sequence is that of Probable potassium transport system protein Kup from Trichlorobacter lovleyi (strain ATCC BAA-1151 / DSM 17278 / SZ) (Geobacter lovleyi).